The sequence spans 588 residues: MGEKNGVIIRVTGPVVEAEGMAGSRMYESVRVGNDGLIGEIIILEGDRATIQVYEETIGLTPGEPVVRTYLPLSVELGPGLIGTMYDGIQRPLEEILKNTGDMIERGSSAPALDRTKKYRFYPLAKSGDMVREGDRIGCVRESVSVNHYILIPPGLSGTIHFIAEQGEYVITDTIVILDTGEEKKELTMIQRWPVRDPRPVRERLDPVEPLLTGQRIIDTLFPLARGGTAAIPGPFGSGKTVVQQQLAKWVNADIIIYIGCGERGNEMADVLEQFPTLKDPRTGHALSSRMVLIANTSNMPVAAREASVYTGITIAEYYRDMGYHVALMADSTSRWAEAMREISGRLEEMPGEEGYPAYLSSRLADFYERAGRVSLLGSGDHEGSISVIGAVSPPGGDFSEPVTQNTLRIVKVFWALDADLAYQRHFPAINWLMSYSLYSPIAGIWWEEHIGPEFIRMKQEMMEILQRENELEEIIRLVGPETLPESDRLLLLKAEILRESYLMQYAFDEFDTFTGPKKQYRMLKAIFTFFSQAERALETGISVSRLRGLPVIESFARMGTASPEEEDPLFESIARDTDAIRDLKEVL.

234–241 is an ATP binding site; that stretch reads GPFGSGKT.

It belongs to the ATPase alpha/beta chains family. As to quaternary structure, has multiple subunits with at least A(3), B(3), C, D, E, F, H, I and proteolipid K(x).

The protein resides in the cell membrane. It catalyses the reaction ATP + H2O + 4 H(+)(in) = ADP + phosphate + 5 H(+)(out). Its function is as follows. Component of the A-type ATP synthase that produces ATP from ADP in the presence of a proton gradient across the membrane. The A chain is the catalytic subunit. The sequence is that of A-type ATP synthase subunit A 3 from Methanospirillum hungatei JF-1 (strain ATCC 27890 / DSM 864 / NBRC 100397 / JF-1).